The sequence spans 537 residues: Ceramide kinase (537 aa).

Positions 1-115 are essential for enzyme activity; the sequence is MGATGAAEPL…CPEEQLCHLW (115 aa). Residues 1 to 125 are required for binding to sulfatide and phosphoinositides; the sequence is MGATGAAEPL…LQTLREMLEK (125 aa). A DAGKc domain is found at 128-278; that stretch reads SRPKHLLVFI…MDVSSVHHNS (151 aa). ATP-binding positions include 138-140 and 170-174; these read NPF and TEHAN. Residue 195–198 participates in substrate binding; sequence GGDG. Residue Asp197 is the Proton donor/acceptor of the active site. ATP contacts are provided by residues Glu202, 239–241, Arg304, and Arg310; that span reads GST. A phosphoserine mark is found at Ser340 and Ser408. 502–504 lines the ATP pocket; that stretch reads DGE.

It depends on Ca(2+) as a cofactor. Mg(2+) serves as cofactor. High level expression in heart, brain, skeletal muscle, kidney and liver; moderate in peripheral blood leukocytes and thymus; very low in spleen, small intestine, placenta and lung.

It is found in the cytoplasm. Its subcellular location is the cell membrane. It carries out the reaction an N-acylsphing-4-enine + ATP = an N-acylsphing-4-enine 1-phosphate + ADP + H(+). The catalysed reaction is N-(hexanoyl)sphing-4-enine + ATP = N-hexanoylsphing-4-enine 1-phosphate + ADP + H(+). It catalyses the reaction N-(acetyl)-sphing-4-enine + ATP = N-(acetyl)-sphing-4-enine-1-phosphate + ADP + H(+). The enzyme catalyses N-hexadecanoylsphing-4-enine + ATP = N-(hexadecanoyl)-sphing-4-enine-1-phosphate + ADP + H(+). It carries out the reaction N-hexanoyl-(4R)-hydroxysphinganine + ATP = N-hexanoyl-(4R)-hydroxysphinganine-1-phosphate + ADP + H(+). With respect to regulation, inhibited by sulfatide. Inhibited by sphinganine, sphingenine, and N,N-Dimethylsphingosine (DMS). Cardiolipin at 0.1 uM significantly increases activity, whereas at concentrations &gt;1 uM has an inhibitory effect. Catalyzes specifically the phosphorylation of ceramide to form ceramide 1-phosphate. Acts efficiently on natural and analog ceramides (C6, C8, C16 ceramides, and C8-dihydroceramide), to a lesser extent on C2-ceramide and C6-dihydroceramide, but not on other lipids, such as various sphingosines. Shows a greater preference for D-erythro isomer of ceramides. Binds phosphoinositides. The chain is Ceramide kinase (CERK) from Homo sapiens (Human).